Here is a 985-residue protein sequence, read N- to C-terminus: MTQSAARRASSRATPARKTPPAPASQTPAPSPGGTAGTALGPTSRRSSGSAAAKDQPLKEDIRFLGRLLGDVLREQEGAAAFETVETIRQTAVRFRRDGDRQAEQELDRLLKTLSRDQTTSVVRAFSYFSHLANIAEDQHHNRRRRVHALAGSSPQPGSLLRALLSAADEGLSGDALRRFFDAALIVPVLTAHPTEVQRKSILDAQREIARLLAERDAPLTVRERERNVTLLRAHVTKLWQTRMLRTTRLMVADEIENALSYYQTTFLREIPALYRELEEDVATVFPRRGARGEPAPLPAFFQMGSWIGGDRDGNPFVTAQTLRHAAQRQASVILTWYLDEIHALGAELSMSTLLVDVSADLLALAERSPDHSEHRADEPYRRALIGVYARLAATCRELTGEDAGRHAVGPAPAYTRAEELRADLQIVIDSLAAHHGEALADARLASLARAIDVFGFHLASIDLRQVSDVHEATVAELLRVAGVEGAYAALSEADKRTLLLRELQQPRLLTLPFHTYSETTASELDIFRAAREVRARYGSRIVRNYIISHTETLSDLLEVMLLQKEAGMFRHGTNGSGGAGLDVMVIPLFETIEDLRNAPQIMGELLALPGFDAVLAAQGNEQEVMLGYSDSNKDGGFLTSNWELYKTELALVELFERKGVRLRLFHGRGGTVGRGGGPTYQAILSQPPGTVNGQIRLTEQGEIISSKFANPEIGRRNLETIVAATLEATLLPTRNRPKGLEEFEAAMQALSDHAFSAYRHLVYETPGFKDYFFATTPITEIADLNLGSRPASRKLMDRKQRRIEDLRAIPWGFSWGQCRLLLPGWFGFGSAVQRWLDEAGSAKAKAARLATLKRMHKQWPFFANLLSNMDMVLSKADLNVASRYAQLCEDRKLRNAVFSRISAEFTLTEQVLGAITGQSERLADNPLLARSIKNRFPYLDPLNHLQVELLKRFRSGKAGSNDARVRRGIHLSINGIAAGLRNSG.

Positions 1–17 (MTQSAARRASSRATPAR) are enriched in low complexity. Residues 1–55 (MTQSAARRASSRATPARKTPPAPASQTPAPSPGGTAGTALGPTSRRSSGSAAAKD) are disordered. Residues H193 and K634 contribute to the active site.

Belongs to the PEPCase type 1 family. The cofactor is Mg(2+).

The enzyme catalyses oxaloacetate + phosphate = phosphoenolpyruvate + hydrogencarbonate. Its function is as follows. Forms oxaloacetate, a four-carbon dicarboxylic acid source for the tricarboxylic acid cycle. In Ralstonia nicotianae (strain ATCC BAA-1114 / GMI1000) (Ralstonia solanacearum), this protein is Phosphoenolpyruvate carboxylase.